The following is a 108-amino-acid chain: Competence protein ComGC (108 aa).

Residues M1–V13 form the signal peptide. The segment at K14 to L39 is may be involved in polymerization of ComGC. F16 is subject to N-methylphenylalanine. Residues F16–V36 traverse the membrane as a helical segment.

The protein belongs to the ComGC family. As to quaternary structure, the transformation pili are flexible filaments, consisting mainly of the major pilin ComGC and smaller amounts of the minor pilins, including at least ComGD, ComGF and ComGG, and perhaps ComGE. Homodimer. Forms higher-order multimers. Interacts with ComGG; the interaction is probably direct. Undergoes proteolytic cleavage.

The protein localises to the cell membrane. Its subcellular location is the cell surface. It is found in the fimbrium. It localises to the secreted. Its function is as follows. Major component of the type IV-like pilus (T4P) that plays a role in transformation. Transformation pili are dynamically extended and retracted, perhaps thereby promoting DNA uptake and transformation. Required for transformation. Required for DNA binding. This is Competence protein ComGC from Streptococcus pneumoniae (strain ATCC BAA-255 / R6).